We begin with the raw amino-acid sequence, 141 residues long: Large ribosomal subunit protein uL11 (141 aa).

The protein belongs to the universal ribosomal protein uL11 family. In terms of assembly, part of the ribosomal stalk of the 50S ribosomal subunit. Interacts with L10 and the large rRNA to form the base of the stalk. L10 forms an elongated spine to which L12 dimers bind in a sequential fashion forming a multimeric L10(L12)X complex. Post-translationally, one or more lysine residues are methylated.

Its function is as follows. Forms part of the ribosomal stalk which helps the ribosome interact with GTP-bound translation factors. The sequence is that of Large ribosomal subunit protein uL11 from Moorella thermoacetica (strain ATCC 39073 / JCM 9320).